The following is a 1078-amino-acid chain: Exportin-1 (1078 aa).

One can recognise an Importin N-terminal domain in the interval 34–100 (AQQVLTQFQA…RNYIVAVMIK (67 aa)).

The protein belongs to the exportin family. In terms of assembly, interacts with php4.

The protein resides in the nucleus. Its function is as follows. Receptor for the leucine-rich nuclear export signal (NES). In Schizosaccharomyces pombe (strain 972 / ATCC 24843) (Fission yeast), this protein is Exportin-1 (xpo1).